A 429-amino-acid polypeptide reads, in one-letter code: 3-phosphoshikimate 1-carboxyvinyltransferase (429 aa).

3-phosphoshikimate-binding residues include Lys22, Ser23, and Arg27. Lys22 contributes to the phosphoenolpyruvate binding site. 2 residues coordinate phosphoenolpyruvate: Gly94 and Arg122. 3-phosphoshikimate-binding residues include Ser167, Gln169, Asp315, and Lys342. Gln169 lines the phosphoenolpyruvate pocket. Asp315 (proton acceptor) is an active-site residue. The phosphoenolpyruvate site is built by Arg346 and Arg388.

This sequence belongs to the EPSP synthase family. In terms of assembly, monomer.

It localises to the cytoplasm. The enzyme catalyses 3-phosphoshikimate + phosphoenolpyruvate = 5-O-(1-carboxyvinyl)-3-phosphoshikimate + phosphate. It functions in the pathway metabolic intermediate biosynthesis; chorismate biosynthesis; chorismate from D-erythrose 4-phosphate and phosphoenolpyruvate: step 6/7. Catalyzes the transfer of the enolpyruvyl moiety of phosphoenolpyruvate (PEP) to the 5-hydroxyl of shikimate-3-phosphate (S3P) to produce enolpyruvyl shikimate-3-phosphate and inorganic phosphate. This Citrifermentans bemidjiense (strain ATCC BAA-1014 / DSM 16622 / JCM 12645 / Bem) (Geobacter bemidjiensis) protein is 3-phosphoshikimate 1-carboxyvinyltransferase.